We begin with the raw amino-acid sequence, 425 residues long: Serine hydroxymethyltransferase (425 aa).

(6S)-5,6,7,8-tetrahydrofolate contacts are provided by residues L124 and G128–L130. K233 carries the N6-(pyridoxal phosphate)lysine modification.

Belongs to the SHMT family. In terms of assembly, homodimer. The cofactor is pyridoxal 5'-phosphate.

The protein localises to the cytoplasm. It carries out the reaction (6R)-5,10-methylene-5,6,7,8-tetrahydrofolate + glycine + H2O = (6S)-5,6,7,8-tetrahydrofolate + L-serine. Its pathway is one-carbon metabolism; tetrahydrofolate interconversion. It functions in the pathway amino-acid biosynthesis; glycine biosynthesis; glycine from L-serine: step 1/1. Catalyzes the reversible interconversion of serine and glycine with tetrahydrofolate (THF) serving as the one-carbon carrier. This reaction serves as the major source of one-carbon groups required for the biosynthesis of purines, thymidylate, methionine, and other important biomolecules. Also exhibits THF-independent aldolase activity toward beta-hydroxyamino acids, producing glycine and aldehydes, via a retro-aldol mechanism. This Clavibacter michiganensis subsp. michiganensis (strain NCPPB 382) protein is Serine hydroxymethyltransferase.